We begin with the raw amino-acid sequence, 390 residues long: Ammonium/H(+) antiporter subunit AmhT (390 aa).

The next 10 membrane-spanning stretches (helical) occupy residues 2–22 (VIPE…TGFV), 31–51 (VVIF…SHLL), 52–72 (HFAG…EFPL), 94–114 (FGVT…SLII), 143–163 (FMLG…AVLV), 178–198 (LLVV…VFLF), 212–232 (DLFI…ALYL), 266–286 (LLLP…EGIP), 288–308 (IPLL…VGVL), and 351–371 (VFIL…PSIA).

Belongs to the monovalent cation:proton antiporter 2 (CPA2) transporter (TC 2.A.37) family. As to quaternary structure, interacts with AmhM.

The protein localises to the cell membrane. Its activity is regulated as follows. AmhT alone exhibits antiport activity, but interaction with AmhM confers different properties, such as higher KM for potassium. Functionally, ammonium/proton antiporter that mediates the efflux of ammonium ions. Can also transport potassium or rubidium, but not sodium or lithium. This Alkalihalophilus pseudofirmus (strain ATCC BAA-2126 / JCM 17055 / OF4) (Bacillus pseudofirmus) protein is Ammonium/H(+) antiporter subunit AmhT (amhT).